Here is a 222-residue protein sequence, read N- to C-terminus: Orotidine 5'-phosphate decarboxylase (222 aa).

Substrate is bound by residues aspartate 11, lysine 30, 59 to 68, serine 115, 164 to 174, glycine 187, and arginine 188; these read DFKLADIGYI and PGMGSQGGSYG. The active-site Proton donor is the lysine 61.

Belongs to the OMP decarboxylase family. Type 1 subfamily. As to quaternary structure, homodimer.

It carries out the reaction orotidine 5'-phosphate + H(+) = UMP + CO2. It participates in pyrimidine metabolism; UMP biosynthesis via de novo pathway; UMP from orotate: step 2/2. In terms of biological role, catalyzes the decarboxylation of orotidine 5'-monophosphate (OMP) to uridine 5'-monophosphate (UMP). This is Orotidine 5'-phosphate decarboxylase from Saccharolobus solfataricus (strain ATCC 35092 / DSM 1617 / JCM 11322 / P2) (Sulfolobus solfataricus).